The following is a 350-amino-acid chain: MIYPLLLSALPLLSSAALTYRGADISSLLIEEDAGISYKNLNGETQALEDILVNNGVNSIRQRVWVDPSDGSYDLDYNLKLAKRVQAAGMSIYLDLHLSDTWADPSDQTTPTGWSTTDIDTLTWQLYNYTLDVCNTFAENDIDIEIVSIGNEISSGLLWPLGKTSNYDNIAKLLHSGAWGVKDSNQATTPKIMIHLDNGWDWEEQEYFYKTVLATGSLLSTDFDLMGVSYYPFYNSEATLSALQTSLTNMQSNYDKSVVVVETNWPVSCPDPEYSFPSDLSSIPFSAAGQEEFLEKLAEVVEGVTDGLGIYYWEPAWVDNAALGSSCADNLMVDIDTDEVLESVTVFEDL.

The N-terminal stretch at 1 to 16 is a signal peptide; that stretch reads MIYPLLLSALPLLSSA. Residue Asn-128 is glycosylated (N-linked (GlcNAc...) asparagine). Glu-152 acts as the Proton donor in catalysis. Glu-262 functions as the Nucleophile in the catalytic mechanism.

Belongs to the glycosyl hydrolase 53 family.

The protein resides in the secreted. It carries out the reaction The enzyme specifically hydrolyzes (1-&gt;4)-beta-D-galactosidic linkages in type I arabinogalactans.. In terms of biological role, endogalactanase involved in the degradation of plant cell wall polysaccharides, and more particularly of hairy regions of pectin. The protein is Arabinogalactan endo-beta-1,4-galactanase A (galA) of Aspergillus niger.